A 434-amino-acid polypeptide reads, in one-letter code: Eukaryotic translation initiation factor 3 subunit E (434 aa).

One can recognise a PCI domain in the interval 219–392 (FFNHPKGRDL…GHVVMGTQPL (174 aa)).

This sequence belongs to the eIF-3 subunit E family. As to quaternary structure, component of the eukaryotic translation initiation factor 3 (eIF-3) complex. The eIF-3 complex interacts with pix. Interacts with mxt.

The protein localises to the cytoplasm. Component of the eukaryotic translation initiation factor 3 (eIF-3) complex, which is involved in protein synthesis of a specialized repertoire of mRNAs and, together with other initiation factors, stimulates binding of mRNA and methionyl-tRNAi to the 40S ribosome. The eIF-3 complex specifically targets and initiates translation of a subset of mRNAs involved in cell proliferation. This Drosophila virilis (Fruit fly) protein is Eukaryotic translation initiation factor 3 subunit E (eIF3-S6).